We begin with the raw amino-acid sequence, 732 residues long: MAEFSDPPPSNLSSSHKLTKPNQTLDESSPTAPIRDLVTNSLSLSSPIRQIQALSPAKPDGSSSSPPDKTLNFNPEENRDVNPDESSSSPSDKTLIAPPAQISPVSNNNHLRITNTSDSYLYRPPRRYIEYESDDDELNKMEPTKPLQLSWWYPRIEPTGVGAGLYNSGNTCFIASVLQCFTHTVPLIDSLRSFMYGNPCNCGNEKFCVMQALRDHIELALRSSGYGINIDRFRDNLTYFSSDFMINHQEDAHEFLQSFLDKLERCCLDPKNQLGSVSSQDLNIVDNVFGGGLMSTLCCCNCNSVSNTFEPSLGWSLEIEDVNTLWKALESFTCVEKLEDQLTCDNCKEKVTKEKQLRFDKLPPVATFHLKRFTNDGVTMEKIFDHIEFPLELDLSPFMSSNHDPEVSTRYHLYAFVEHIGIRATFGHYSSYVRSAPETWHNFDDSKVTRISEERVLSRPAYILFYAREGTPWFSSTFEQLKTVFEATPLHFSPVSVLDNSYESVDNSSKACNDSVGVSIPDVKWPDSCCQEPKEEVFHSAESSNNEDSSAMIDALGSPQSEKPFAETSQQTEPESCPTENKAYIDKSEKPFAETSQPKEPKPFADRASIDAPLLKVQNQDISPKRKAGERATLGGPKLKYQKPNSHQKRQGTFQIQRAHLQTKKQEESRKTKRPLFRSNVAASAPDPKYKNHALSYLNRAQTPRARKLANALSDSPTKKKKSSNMRRSIKL.

Positions M1–S10 are enriched in pro residues. The disordered stretch occupies residues M1–L111. 2 stretches are compositionally biased toward polar residues: residues N11–T31 and V38–A53. Positions S55–K69 are enriched in low complexity. The 307-residue stretch at A163–E469 folds into the USP domain. The Nucleophile role is filled by C172. Residue H428 is the Proton acceptor of the active site. The disordered stretch occupies residues K534–L732. Residues S540–A551 show a composition bias toward low complexity. The span at A583–S609 shows a compositional bias: basic and acidic residues. Residues K719–L732 are compositionally biased toward basic residues.

It belongs to the peptidase C19 family.

The catalysed reaction is Thiol-dependent hydrolysis of ester, thioester, amide, peptide and isopeptide bonds formed by the C-terminal Gly of ubiquitin (a 76-residue protein attached to proteins as an intracellular targeting signal).. Functionally, recognizes and hydrolyzes the peptide bond at the C-terminal Gly of ubiquitin. Involved in the processing of poly-ubiquitin precursors as well as that of ubiquitinated proteins. This is Ubiquitin carboxyl-terminal hydrolase 21 (UBP21) from Arabidopsis thaliana (Mouse-ear cress).